Reading from the N-terminus, the 676-residue chain is Methionine--tRNA ligase (676 aa).

The short motif at 15–25 (PYANGSIHLGH) is the 'HIGH' region element. Positions 146, 149, 159, and 162 each coordinate Zn(2+). The short motif at 332 to 336 (KMSKS) is the 'KMSKS' region element. Residue Lys-335 coordinates ATP. A tRNA-binding domain is found at 574–676 (DFAKVDMRIA…SGAQPGMQVK (103 aa)).

Belongs to the class-I aminoacyl-tRNA synthetase family. MetG type 1 subfamily. Homodimer. Zn(2+) serves as cofactor.

The protein resides in the cytoplasm. It catalyses the reaction tRNA(Met) + L-methionine + ATP = L-methionyl-tRNA(Met) + AMP + diphosphate. In terms of biological role, is required not only for elongation of protein synthesis but also for the initiation of all mRNA translation through initiator tRNA(fMet) aminoacylation. This Pectobacterium atrosepticum (strain SCRI 1043 / ATCC BAA-672) (Erwinia carotovora subsp. atroseptica) protein is Methionine--tRNA ligase.